The sequence spans 425 residues: Inositol hexakisphosphate kinase 2 (425 aa).

ATP contacts are provided by residues 206–208 (ENL) and Asp219. Residues 215–223 (PCVLDLKMG), Lys221, and 235–242 (KAANQIRK) each bind substrate. Residue Asp382 coordinates ATP. A substrate-binding site is contributed by His385.

Belongs to the inositol phosphokinase (IPK) family. As to expression, detected in kidney, intestine, liver and heart.

It is found in the nucleus. It carries out the reaction 1D-myo-inositol hexakisphosphate + ATP = 5-diphospho-1D-myo-inositol 1,2,3,4,6-pentakisphosphate + ADP. Its pathway is phospholipid metabolism; phosphatidylinositol metabolism. Converts inositol hexakisphosphate (InsP6) to diphosphoinositol pentakisphosphate (InsP7/PP-InsP5). The sequence is that of Inositol hexakisphosphate kinase 2 (IP6K2) from Oryctolagus cuniculus (Rabbit).